A 525-amino-acid chain; its full sequence is GMP synthase [glutamine-hydrolyzing] (525 aa).

Residues 9–207 (RILILDFGSQ…VRDICQCEAL (199 aa)) enclose the Glutamine amidotransferase type-1 domain. C86 functions as the Nucleophile in the catalytic mechanism. Residues H181 and E183 contribute to the active site. The GMPS ATP-PPase domain maps to 208-400 (WTPAKIIDDA…LGLPYDMLYR (193 aa)). ATP is bound at residue 235–241 (SGGVDSS).

Homodimer.

It catalyses the reaction XMP + L-glutamine + ATP + H2O = GMP + L-glutamate + AMP + diphosphate + 2 H(+). It functions in the pathway purine metabolism; GMP biosynthesis; GMP from XMP (L-Gln route): step 1/1. In terms of biological role, catalyzes the synthesis of GMP from XMP. The polypeptide is GMP synthase [glutamine-hydrolyzing] (Escherichia coli O8 (strain IAI1)).